A 252-amino-acid polypeptide reads, in one-letter code: MLTKRIIPCLDVTAGRVVKGVNFVGLRDAGDPVEIAKRYDTQGADELTFLDITATSDGRDLILHIIEDVASQVFIPLTVGGGVRTVADVRRLLNAGADKVSMNSSAVANPDLVSDAAAYYGSQCIVVAIDAKQTEAGNWEVFTHGGRTATGMDVVEWAKEVAKRGAGEILLTSINRDGSKDGFDLALTAAVSDAVSLPVIASGGVGNLQHLVDGITKGHADAVLAASICHYSEYTVGQAKEYMAAQGIPVRI.

Residues Asp11 and Asp130 contribute to the active site.

It belongs to the HisA/HisF family. In terms of assembly, heterodimer of HisH and HisF.

It localises to the cytoplasm. It carries out the reaction 5-[(5-phospho-1-deoxy-D-ribulos-1-ylimino)methylamino]-1-(5-phospho-beta-D-ribosyl)imidazole-4-carboxamide + L-glutamine = D-erythro-1-(imidazol-4-yl)glycerol 3-phosphate + 5-amino-1-(5-phospho-beta-D-ribosyl)imidazole-4-carboxamide + L-glutamate + H(+). Its pathway is amino-acid biosynthesis; L-histidine biosynthesis; L-histidine from 5-phospho-alpha-D-ribose 1-diphosphate: step 5/9. IGPS catalyzes the conversion of PRFAR and glutamine to IGP, AICAR and glutamate. The HisF subunit catalyzes the cyclization activity that produces IGP and AICAR from PRFAR using the ammonia provided by the HisH subunit. In Polynucleobacter necessarius subsp. necessarius (strain STIR1), this protein is Imidazole glycerol phosphate synthase subunit HisF.